Consider the following 217-residue polypeptide: Membrane-spanning 4-domains subfamily A member 6C (217 aa).

The span at 1 to 20 shows a compositional bias: polar residues; it reads MIPQVVTNETITTISPNGIN. Residues 1–33 are disordered; sequence MIPQVVTNETITTISPNGINFPQKDESQPTQQR. Topologically, residues 1–46 are cytoplasmic; that stretch reads MIPQVVTNETITTISPNGINFPQKDESQPTQQRQDSLKKHLKAEIK. The helical transmembrane segment at 47-67 threads the bilayer; it reads VIVAIQIMCAVTVLALGIILA. Over 68 to 84 the chain is Extracellular; that stretch reads SVPPVPYFNSVFSVLLK. A helical transmembrane segment spans residues 85–105; it reads SGYPFIGALFFIASGILSIIT. The Cytoplasmic portion of the chain corresponds to 106 to 121; the sequence is ERKSTKPLVDASLTLN. A helical membrane pass occupies residues 122 to 142; it reads ILSVSFAFVGIIIISVSLAGL. The Extracellular segment spans residues 143–186; it reads HPASEQCKQSKELSLIEHDYYQPFYNSDRSECAVTKSILTGALS. The helical transmembrane segment at 187-207 threads the bilayer; sequence VMLIISVLELGLALLSAMLWL. Over 208 to 217 the chain is Cytoplasmic; sequence REGVLTSLRM.

It belongs to the MS4A family. Expressed only by thymus, spleen, peripheral lymph node and bone marrow.

It localises to the membrane. In terms of biological role, may be involved in signal transduction as a component of a multimeric receptor complex. This is Membrane-spanning 4-domains subfamily A member 6C (Ms4a6c) from Mus musculus (Mouse).